The chain runs to 428 residues: Serine--tRNA ligase (428 aa).

L-serine is bound at residue 234–236 (TAE). Residue 265 to 267 (RRE) coordinates ATP. Residue E288 participates in L-serine binding. Position 352 to 355 (352 to 355 (EISS)) interacts with ATP. S388 lines the L-serine pocket.

This sequence belongs to the class-II aminoacyl-tRNA synthetase family. Type-1 seryl-tRNA synthetase subfamily. Homodimer. The tRNA molecule binds across the dimer.

The protein resides in the cytoplasm. It catalyses the reaction tRNA(Ser) + L-serine + ATP = L-seryl-tRNA(Ser) + AMP + diphosphate + H(+). The catalysed reaction is tRNA(Sec) + L-serine + ATP = L-seryl-tRNA(Sec) + AMP + diphosphate + H(+). Its pathway is aminoacyl-tRNA biosynthesis; selenocysteinyl-tRNA(Sec) biosynthesis; L-seryl-tRNA(Sec) from L-serine and tRNA(Sec): step 1/1. Catalyzes the attachment of serine to tRNA(Ser). Is also able to aminoacylate tRNA(Sec) with serine, to form the misacylated tRNA L-seryl-tRNA(Sec), which will be further converted into selenocysteinyl-tRNA(Sec). The polypeptide is Serine--tRNA ligase (Synechococcus elongatus (strain ATCC 33912 / PCC 7942 / FACHB-805) (Anacystis nidulans R2)).